A 557-amino-acid polypeptide reads, in one-letter code: Dihydroxy-acid dehydratase (557 aa).

D78 is a Mg(2+) binding site. [2Fe-2S] cluster is bound at residue C119. Residues D120 and K121 each contribute to the Mg(2+) site. At K121 the chain carries N6-carboxylysine. Position 192 (C192) interacts with [2Fe-2S] cluster. E442 contacts Mg(2+). S468 serves as the catalytic Proton acceptor.

This sequence belongs to the IlvD/Edd family. Homodimer. Requires [2Fe-2S] cluster as cofactor. Mg(2+) serves as cofactor.

The catalysed reaction is (2R)-2,3-dihydroxy-3-methylbutanoate = 3-methyl-2-oxobutanoate + H2O. The enzyme catalyses (2R,3R)-2,3-dihydroxy-3-methylpentanoate = (S)-3-methyl-2-oxopentanoate + H2O. Its pathway is amino-acid biosynthesis; L-isoleucine biosynthesis; L-isoleucine from 2-oxobutanoate: step 3/4. It functions in the pathway amino-acid biosynthesis; L-valine biosynthesis; L-valine from pyruvate: step 3/4. In terms of biological role, functions in the biosynthesis of branched-chain amino acids. Catalyzes the dehydration of (2R,3R)-2,3-dihydroxy-3-methylpentanoate (2,3-dihydroxy-3-methylvalerate) into 2-oxo-3-methylpentanoate (2-oxo-3-methylvalerate) and of (2R)-2,3-dihydroxy-3-methylbutanoate (2,3-dihydroxyisovalerate) into 2-oxo-3-methylbutanoate (2-oxoisovalerate), the penultimate precursor to L-isoleucine and L-valine, respectively. This chain is Dihydroxy-acid dehydratase, found in Bacillus cereus (strain AH820).